We begin with the raw amino-acid sequence, 827 residues long: uncharacterized protein (827 aa).

In terms of domain architecture, PAS 1 spans 12-82; it reads FDADFEAILN…DMDIGVLSTG (71 aa). The PAC 1 domain occupies 212–264; it reads LDVEFRLAAAEGGYSWYRSRAATRRAEDGSILRWYGTVEDIDDRRKMFEALKE. In terms of domain architecture, PAS 2 spans 265–335; that stretch reads SEARFRAIAD…RVFYQAFDLR (71 aa). In terms of domain architecture, PAC 2 spans 338 to 390; it reads VRMEYRLKRAGGGSAWVIDIGQPRFASDGTFLGFVGIALDITERRNAEQERLL. The region spanning 428–561 is the GGDEF domain; sequence TRLAILCLDL…GGGTIVQYEP (134 aa). An EAL domain is found at 570–820; that stretch reads RQRMKVSLRH…QAMALLKSRS (251 aa).

This is an uncharacterized protein from Sinorhizobium fredii (strain NBRC 101917 / NGR234).